Reading from the N-terminus, the 267-residue chain is Undecaprenyl-diphosphatase (267 aa).

Transmembrane regions (helical) follow at residues 39–59, 87–107, 112–132, 145–165, 183–203, 216–236, and 244–264; these read PGLAFDVALHFGTLLALIWYF, VLYLIAATIPGGIGGLLLNDL, FRSPVVIATSLIVMGILLWAV, VTLRDAIIVGCAQVLALVPGV, PSVARFSFLMSMPITLAAVIV, LPLLAGVAAAAVSSWFAISVL, and SFGVFAVYRVLLGIVVFATLA.

Belongs to the UppP family.

It is found in the cell inner membrane. It catalyses the reaction di-trans,octa-cis-undecaprenyl diphosphate + H2O = di-trans,octa-cis-undecaprenyl phosphate + phosphate + H(+). Its function is as follows. Catalyzes the dephosphorylation of undecaprenyl diphosphate (UPP). Confers resistance to bacitracin. This Gemmatimonas aurantiaca (strain DSM 14586 / JCM 11422 / NBRC 100505 / T-27) protein is Undecaprenyl-diphosphatase.